Here is a 615-residue protein sequence, read N- to C-terminus: Probable inactive purple acid phosphatase 24 (615 aa).

The N-terminal stretch at 1–26 (MARVLGVLLCLLALFSSSLCLDHANG) is a signal peptide. Asparagine 129, asparagine 267, and asparagine 275 each carry an N-linked (GlcNAc...) asparagine glycan. Position 297 (aspartate 297) interacts with Fe cation. N-linked (GlcNAc...) asparagine glycosylation is present at asparagine 318. Positions 338 and 341 each coordinate Fe cation. Position 338 (aspartate 338) interacts with Zn(2+). Zn(2+)-binding residues include asparagine 371, histidine 460, and histidine 502. Asparagine 371 is a binding site for substrate. 502–504 (HVH) is a binding site for substrate. Fe cation is bound at residue histidine 504. The N-linked (GlcNAc...) asparagine glycan is linked to asparagine 592.

This sequence belongs to the metallophosphoesterase superfamily. Purple acid phosphatase family. Homodimer. It depends on Fe cation as a cofactor. The cofactor is Zn(2+). In terms of tissue distribution, specifically expressed in flowers.

It is found in the secreted. The protein is Probable inactive purple acid phosphatase 24 (PAP24) of Arabidopsis thaliana (Mouse-ear cress).